We begin with the raw amino-acid sequence, 652 residues long: DNA ligase (652 aa).

NAD(+) is bound by residues 29–33 (DSEYD), 78–79 (SL), and Glu107. Catalysis depends on Lys109, which acts as the N6-AMP-lysine intermediate. NAD(+) is bound by residues Arg130, Glu164, Lys278, and Lys302. Zn(2+) contacts are provided by Cys395, Cys398, Cys413, and Cys418. The region spanning 577 to 652 (VADAALSGLT…VRDEAWLESL (76 aa)) is the BRCT domain.

Belongs to the NAD-dependent DNA ligase family. LigA subfamily. Mg(2+) is required as a cofactor. The cofactor is Mn(2+).

It carries out the reaction NAD(+) + (deoxyribonucleotide)n-3'-hydroxyl + 5'-phospho-(deoxyribonucleotide)m = (deoxyribonucleotide)n+m + AMP + beta-nicotinamide D-nucleotide.. DNA ligase that catalyzes the formation of phosphodiester linkages between 5'-phosphoryl and 3'-hydroxyl groups in double-stranded DNA using NAD as a coenzyme and as the energy source for the reaction. It is essential for DNA replication and repair of damaged DNA. This is DNA ligase from Streptococcus pneumoniae (strain Taiwan19F-14).